The sequence spans 292 residues: Elongation factor Ts (292 aa).

Residues 80–83 (TDFV) form an involved in Mg(2+) ion dislocation from EF-Tu region.

It belongs to the EF-Ts family.

It localises to the cytoplasm. Its function is as follows. Associates with the EF-Tu.GDP complex and induces the exchange of GDP to GTP. It remains bound to the aminoacyl-tRNA.EF-Tu.GTP complex up to the GTP hydrolysis stage on the ribosome. This is Elongation factor Ts from Oenococcus oeni (strain ATCC BAA-331 / PSU-1).